A 141-amino-acid chain; its full sequence is Extracellular globin-1 (141 aa).

The 141-residue stretch at 1 to 141 (DCNTLKRFKV…YAVIAAGIKP (141 aa)) folds into the Globin domain. An intrachain disulfide couples Cys2 to Cys131. His94 provides a ligand contact to heme b.

Belongs to the globin family. The giant hemoglobins of worms are formed of a monomeric subunit and a disulfide-bonded trimer. This subunit is monomeric.

The protein resides in the secreted. This is Extracellular globin-1 from Metaphire sieboldi (Earthworm).